A 359-amino-acid chain; its full sequence is Glycerol-3-phosphate dehydrogenase [NAD(P)+] (359 aa).

Thr-11, Trp-12, Arg-32, and Lys-107 together coordinate NADPH. Lys-107 and Gly-138 together coordinate sn-glycerol 3-phosphate. Ala-142 serves as a coordination point for NADPH. Sn-glycerol 3-phosphate contacts are provided by Lys-193, Asp-246, Ser-256, Arg-257, and Asn-258. Lys-193 (proton acceptor) is an active-site residue. Residue Arg-257 coordinates NADPH. Val-281 and Glu-283 together coordinate NADPH.

Belongs to the NAD-dependent glycerol-3-phosphate dehydrogenase family.

The protein resides in the cytoplasm. The enzyme catalyses sn-glycerol 3-phosphate + NAD(+) = dihydroxyacetone phosphate + NADH + H(+). It catalyses the reaction sn-glycerol 3-phosphate + NADP(+) = dihydroxyacetone phosphate + NADPH + H(+). The protein operates within membrane lipid metabolism; glycerophospholipid metabolism. In terms of biological role, catalyzes the reduction of the glycolytic intermediate dihydroxyacetone phosphate (DHAP) to sn-glycerol 3-phosphate (G3P), the key precursor for phospholipid synthesis. This is Glycerol-3-phosphate dehydrogenase [NAD(P)+] from Dehalococcoides mccartyi (strain ATCC BAA-2100 / JCM 16839 / KCTC 5957 / BAV1).